The chain runs to 302 residues: Myb-related protein Hv33 (302 aa).

HTH myb-type domains follow at residues 11–63 (QPKV…INYL) and 64–118 (RPDL…KKKL). 2 DNA-binding regions (H-T-H motif) span residues 39–63 (WSSV…INYL) and 91–114 (WSQI…NSCI). The tract at residues 137–158 (ATAAAALPDAEEEDRKPLCPAV) is disordered.

As to expression, germinating seed and apical meristem of shoot and root.

Its subcellular location is the nucleus. In terms of biological role, possible transcription activator in response to an external signal. May be involved in the regulation of flavonoid biosynthesis. The chain is Myb-related protein Hv33 (MYB2) from Hordeum vulgare (Barley).